The sequence spans 1380 residues: Carboxypeptidase D (1380 aa).

The N-terminal stretch at 1–31 is a signal peptide; that stretch reads MASGRDERPPWRLGRLLLLMCLLLLGSSARA. The Extracellular portion of the chain corresponds to 32–1299; that stretch reads AHIKKAEATT…DNRIFGLPRE (1268 aa). The region spanning 57-380 is the Peptidase M14 1 domain; it reads RYYHEEELES…ESLITLIEKV (324 aa). Zn(2+)-binding residues include His-139 and Glu-142. The short motif at 162-164 is the Cell attachment site element; the sequence is RGD. The N-linked (GlcNAc...) asparagine glycan is linked to Asn-172. The tract at residues 190–232 is disordered; sequence AREGDCGFGDGGPSGASGRDNSRGRDLNRSFPDQFSTGEPPAL. Gly residues predominate over residues 195 to 204; that stretch reads CGFGDGGPSG. A glycan (N-linked (GlcNAc...) asparagine) is linked at Asn-217. Residue His-257 participates in Zn(2+) binding. At Tyr-265 the chain carries Phosphotyrosine. Residue Ser-270 is modified to Phosphoserine. The Proton donor/acceptor role is filled by Glu-350. 4 N-linked (GlcNAc...) asparagine glycosylation sites follow: Asn-399, Asn-410, Asn-429, and Asn-522. The region spanning 502-792 is the Peptidase M14 2 domain; the sequence is HHHHFPDMEI…RSLIQFMKQV (291 aa). The Zn(2+) site is built by His-564 and Glu-567. A glycan (N-linked (GlcNAc...) asparagine) is linked at Asn-626. His-671 contacts Zn(2+). Glu-762 acts as the Proton donor/acceptor in catalysis. Residues Asn-811, Asn-855, Asn-867, and Asn-879 are each glycosylated (N-linked (GlcNAc...) asparagine). The interval 874–899 is disordered; the sequence is STDSNNESKKGKGASSSTNDASDPTT. Residues 887 to 897 are compositionally biased toward polar residues; that stretch reads ASSSTNDASDP. One can recognise a Peptidase M14 3 domain in the interval 932–1211; that stretch reads RYHSYKDLSE…RSLLSMLVEV (280 aa). 4 N-linked (GlcNAc...) asparagine glycosylation sites follow: Asn-955, Asn-978, Asn-1070, and Asn-1142. Residues 1300 to 1320 form a helical membrane-spanning segment; that stretch reads LVVTVSGATMSALILTACIIW. S-palmitoyl cysteine attachment occurs at residues Cys-1317, Cys-1321, and Cys-1323. Residues 1321-1380 lie on the Cytoplasmic side of the membrane; the sequence is CICSIKSNRHKDGFHRLRQHHDEYEDEIRMMSTGSKKSLLSHEFQDETDTEEETLYSSKH. A phosphoserine mark is found at Ser-1358 and Ser-1361. A disordered region spans residues 1359–1380; sequence LLSHEFQDETDTEEETLYSSKH. A phosphothreonine mark is found at Thr-1368 and Thr-1370.

The protein belongs to the peptidase M14 family. The cofactor is Zn(2+). As to expression, highly expressed in placenta, pancreas and hepatoma cells. Lower levels found in skeletal muscle, heart and colon carcinoma and melanoma cell lines.

Its subcellular location is the cell membrane. It catalyses the reaction Releases C-terminal Arg and Lys from polypeptides.. The protein is Carboxypeptidase D (CPD) of Homo sapiens (Human).